Consider the following 398-residue polypeptide: Neuroplastin (398 aa).

An N-terminal signal peptide occupies residues 1–28 (MSGSSLPSALALSLLLVSGSLLPGPGAA). 3 Ig-like domains span residues 29 to 134 (QNAG…PSIT), 148 to 235 (PRIV…IEVK), and 238 to 329 (PDIT…SVVT). Topologically, residues 29 to 339 (QNAGFVKSPM…VLRVRSHLAP (311 aa)) are extracellular. A disulfide bond links cysteine 52 and cysteine 116. The interval 149 to 161 (RIVTSEEVIIRDS) is narpin; mediates binding with FGFR1 and has antidepressant-like activity. A disulfide bridge connects residues cysteine 170 and cysteine 218. Residues asparagine 171, asparagine 197, asparagine 229, asparagine 284, asparagine 296, and asparagine 317 are each glycosylated (N-linked (GlcNAc...) asparagine). A disulfide bridge connects residues cysteine 259 and cysteine 316. Residues 340 to 360 (LWPFLGILAEIIILVVIIVVY) traverse the membrane as a helical segment. Residues 361–398 (EKRKRPDEVPDDDEPAGPMKTNSTNNHKDKNLRQRNTN) lie on the Cytoplasmic side of the membrane. Positions 365-398 (RPDEVPDDDEPAGPMKTNSTNNHKDKNLRQRNTN) are disordered.

As to quaternary structure, interacts with ATP2B1; this interaction stabilizes ATP2B1 and increases ATPase activity; this interaction controls T cell calcium homeostasis following T cell activation. Interacts with XKR8; promoting its localization at the cell membrane. Isoform 1 is ubiquitously expressed. Isoform 2 is expressed in brain cortex and cerebellum (at protein level).

The protein localises to the cell membrane. It is found in the postsynaptic density. Functionally, probable homophilic and heterophilic cell adhesion molecule involved in long term potentiation at hippocampal excitatory synapses through activation of p38MAPK. May also regulate neurite outgrowth by activating the FGFR1 signaling pathway. May play a role in synaptic plasticity. Also acts as a chaperone for ATP2B1; stabilizes ATP2B1 and increases its ATPase activity. Promotes localization of XKR8 at the cell membrane. This chain is Neuroplastin (NPTN), found in Homo sapiens (Human).